We begin with the raw amino-acid sequence, 111 residues long: Nucleoid-associated protein CYB_2894 (111 aa).

The protein belongs to the YbaB/EbfC family. As to quaternary structure, homodimer.

The protein resides in the cytoplasm. It is found in the nucleoid. Functionally, binds to DNA and alters its conformation. May be involved in regulation of gene expression, nucleoid organization and DNA protection. The protein is Nucleoid-associated protein CYB_2894 of Synechococcus sp. (strain JA-2-3B'a(2-13)) (Cyanobacteria bacterium Yellowstone B-Prime).